A 417-amino-acid chain; its full sequence is Serine hydroxymethyltransferase (417 aa).

Residues L121 and 125–127 (GHL) each bind (6S)-5,6,7,8-tetrahydrofolate. An N6-(pyridoxal phosphate)lysine modification is found at K229. 355 to 357 (SPF) contributes to the (6S)-5,6,7,8-tetrahydrofolate binding site.

The protein belongs to the SHMT family. As to quaternary structure, homodimer. Requires pyridoxal 5'-phosphate as cofactor.

It is found in the cytoplasm. It carries out the reaction (6R)-5,10-methylene-5,6,7,8-tetrahydrofolate + glycine + H2O = (6S)-5,6,7,8-tetrahydrofolate + L-serine. Its pathway is one-carbon metabolism; tetrahydrofolate interconversion. It participates in amino-acid biosynthesis; glycine biosynthesis; glycine from L-serine: step 1/1. In terms of biological role, catalyzes the reversible interconversion of serine and glycine with tetrahydrofolate (THF) serving as the one-carbon carrier. This reaction serves as the major source of one-carbon groups required for the biosynthesis of purines, thymidylate, methionine, and other important biomolecules. Also exhibits THF-independent aldolase activity toward beta-hydroxyamino acids, producing glycine and aldehydes, via a retro-aldol mechanism. This is Serine hydroxymethyltransferase from Stenotrophomonas maltophilia (strain K279a).